A 483-amino-acid chain; its full sequence is Xylulose kinase (483 aa).

A substrate-binding site is contributed by Met-79–His-80.

This sequence belongs to the FGGY kinase family.

The enzyme catalyses D-xylulose + ATP = D-xylulose 5-phosphate + ADP + H(+). Functionally, catalyzes the phosphorylation of D-xylulose to D-xylulose 5-phosphate. This is Xylulose kinase from Staphylococcus xylosus.